Here is a 359-residue protein sequence, read N- to C-terminus: Queuine tRNA-ribosyltransferase (359 aa).

Aspartate 92 acts as the Proton acceptor in catalysis. Substrate-binding positions include 92–96 (DSGGF), aspartate 146, glutamine 189, and glycine 216. The tract at residues 245-251 (GVGKPAD) is RNA binding. Aspartate 264 functions as the Nucleophile in the catalytic mechanism. The tract at residues 269 to 273 (TRSGR) is RNA binding; important for wobble base 34 recognition. 4 residues coordinate Zn(2+): cysteine 302, cysteine 304, cysteine 307, and histidine 333.

This sequence belongs to the queuine tRNA-ribosyltransferase family. As to quaternary structure, homodimer. Within each dimer, one monomer is responsible for RNA recognition and catalysis, while the other monomer binds to the replacement base PreQ1. The cofactor is Zn(2+).

It catalyses the reaction 7-aminomethyl-7-carbaguanine + guanosine(34) in tRNA = 7-aminomethyl-7-carbaguanosine(34) in tRNA + guanine. The protein operates within tRNA modification; tRNA-queuosine biosynthesis. Its function is as follows. Catalyzes the base-exchange of a guanine (G) residue with the queuine precursor 7-aminomethyl-7-deazaguanine (PreQ1) at position 34 (anticodon wobble position) in tRNAs with GU(N) anticodons (tRNA-Asp, -Asn, -His and -Tyr). Catalysis occurs through a double-displacement mechanism. The nucleophile active site attacks the C1' of nucleotide 34 to detach the guanine base from the RNA, forming a covalent enzyme-RNA intermediate. The proton acceptor active site deprotonates the incoming PreQ1, allowing a nucleophilic attack on the C1' of the ribose to form the product. After dissociation, two additional enzymatic reactions on the tRNA convert PreQ1 to queuine (Q), resulting in the hypermodified nucleoside queuosine (7-(((4,5-cis-dihydroxy-2-cyclopenten-1-yl)amino)methyl)-7-deazaguanosine). The chain is Queuine tRNA-ribosyltransferase from Rickettsia bellii (strain RML369-C).